The primary structure comprises 379 residues: Succinyl-diaminopimelate desuccinylase (379 aa).

H70 provides a ligand contact to Zn(2+). The active site involves D72. Zn(2+) is bound at residue D103. The active-site Proton acceptor is the E137. Positions 138, 166, and 352 each coordinate Zn(2+).

Belongs to the peptidase M20A family. DapE subfamily. In terms of assembly, homodimer. It depends on Zn(2+) as a cofactor. Co(2+) serves as cofactor.

It catalyses the reaction N-succinyl-(2S,6S)-2,6-diaminopimelate + H2O = (2S,6S)-2,6-diaminopimelate + succinate. Its pathway is amino-acid biosynthesis; L-lysine biosynthesis via DAP pathway; LL-2,6-diaminopimelate from (S)-tetrahydrodipicolinate (succinylase route): step 3/3. Catalyzes the hydrolysis of N-succinyl-L,L-diaminopimelic acid (SDAP), forming succinate and LL-2,6-diaminopimelate (DAP), an intermediate involved in the bacterial biosynthesis of lysine and meso-diaminopimelic acid, an essential component of bacterial cell walls. This chain is Succinyl-diaminopimelate desuccinylase, found in Burkholderia ambifaria (strain MC40-6).